Reading from the N-terminus, the 313-residue chain is Testis-expressed protein 264 (313 aa).

Topologically, residues 1-6 are lumenal; it reads MSDLLL. A helical; Signal-anchor for type III membrane protein transmembrane segment spans residues 7–31; it reads LGLIGGLTLLLLLTLLAFAGYSGLL. Residues 32–313 are Cytoplasmic-facing; it reads AGVEVSAGSP…EPTAPEKGKE (282 aa). The disordered stretch occupies residues 193–313; it reads PEMKETEWKW…EPTAPEKGKE (121 aa). Positions 219 to 247 are enriched in polar residues; sequence DTMSDTSSVSLEVSPGSRETSAATLSPGA. Residues Ser239 and Ser244 each carry the phosphoserine modification. The span at 251–263 shows a compositional bias: basic and acidic residues; sequence GWDDGDTRSEHSY. The segment covering 264 to 273 has biased composition (low complexity); sequence SESGASGSSF. The short motif at 273-276 is the LIR motif element; sequence FEEL.

Interacts (via the LIR motif) with ATG8 family proteins MAP1LC3A, MAP1LC3B, GABARAP and GABARAPL1. Interacts with VCP/p97; bridging VCP/p97 to covalent DNA-protein cross-links (DPCs). Interacts with TOP1 (when sumoylated).

Its subcellular location is the endoplasmic reticulum membrane. The protein resides in the cytoplasmic vesicle. It localises to the autophagosome. It is found in the cytoplasm. The protein localises to the cytosol. Its subcellular location is the nucleus. The protein resides in the chromosome. Its function is as follows. Major reticulophagy (also called ER-phagy) receptor that acts independently of other candidate reticulophagy receptors to remodel subdomains of the endoplasmic reticulum into autophagosomes upon nutrient stress, which then fuse with lysosomes for endoplasmic reticulum turnover. The ATG8-containing isolation membrane (IM) cradles a tubular segment of TEX264-positive ER near a three-way junction, allowing the formation of a synapse of 2 juxtaposed membranes with trans interaction between the TEX264 and ATG8 proteins. Expansion of the IM would extend the capture of ER, possibly through a 'zipper-like' process involving continued trans TEX264-ATG8 interactions, until poorly understood mechanisms lead to the fission of relevant membranes and, ultimately, autophagosomal membrane closure. Also involved in the repair of covalent DNA-protein cross-links (DPCs) during DNA synthesis: acts by bridging VCP/p97 to covalent DNA-protein cross-links (DPCs) and initiating resolution of DPCs by SPRTN. The sequence is that of Testis-expressed protein 264 from Homo sapiens (Human).